The following is a 385-amino-acid chain: DNA replication and repair protein RecF (385 aa).

An ATP-binding site is contributed by 30-37; that stretch reads GSNGFGKT.

Belongs to the RecF family.

It is found in the cytoplasm. Functionally, the RecF protein is involved in DNA metabolism; it is required for DNA replication and normal SOS inducibility. RecF binds preferentially to single-stranded, linear DNA. It also seems to bind ATP. This chain is DNA replication and repair protein RecF, found in Mycobacterium avium (strain 104).